The sequence spans 441 residues: 5-hydroxytryptamine receptor 3B (441 aa).

Positions Met-1–Ala-21 are cleaved as a signal peptide. Over Thr-22–His-238 the chain is Extracellular. N-linked (GlcNAc...) asparagine glycans are attached at residues Asn-52, Asn-96, Asn-138, Asn-168, and Asn-203. The cysteines at positions 155 and 169 are disulfide-linked. Residues Pro-239–Gly-259 form a helical membrane-spanning segment. Residues Ser-260–Arg-268 are Cytoplasmic-facing. A helical transmembrane segment spans residues Ala-269–Val-286. Asn-287 carries an N-linked (GlcNAc...) asparagine glycan. Over Asn-287–Gly-303 the chain is Extracellular. The helical transmembrane segment at His-304–Val-324 threads the bilayer. The Cytoplasmic portion of the chain corresponds to Lys-325–Arg-414. Residues Val-381–Asp-413 form an HA-stretch; determines single-channel conductance in 5-HT3 receptors region. Residues Leu-415–Trp-435 traverse the membrane as a helical segment. Topologically, residues Ala-436 to Val-441 are extracellular.

It belongs to the ligand-gated ion channel (TC 1.A.9) family. 5-hydroxytryptamine receptor (TC 1.A.9.2) subfamily. HTR3B sub-subfamily. Forms homopentameric as well as heteropentameric serotonin-activated cation-selective channel complexes with HTR3A. The homomeric complex is not functional. Heteropentameric complexes display properties which resemble that of neuronal serotonin-activated channels in vivo. In terms of processing, N-glycosylation required for membrane localization. As to expression, expressed in the brain cortex, in the caudate nucleus, the hippocampus, the thalamus and the amygdala. Detected in the kidney and testis as well as in monocytes of the spleen, small and large intestine, uterus, prostate, ovary and placenta.

It is found in the postsynaptic cell membrane. The protein localises to the cell membrane. It catalyses the reaction Na(+)(in) = Na(+)(out). It carries out the reaction K(+)(in) = K(+)(out). The enzyme catalyses Ca(2+)(in) = Ca(2+)(out). In terms of biological role, forms serotonin (5-hydroxytryptamine/5-HT3)-activated cation-selective channel complexes, which when activated cause fast, depolarizing responses in neurons. In Homo sapiens (Human), this protein is 5-hydroxytryptamine receptor 3B.